The chain runs to 369 residues: MQVTFCRLRTHQWCFILFNVILFHALLFGTDFVEEYFLHSLPYIDVKVLEIKNKARKLNIEPLRSNLSKYYVLSQSEICKGKNIFLLSLIFSSPGNGTRRDLIRKTWGNVTSVQGHPILTLFALGMPVSVTTQKEINKESCKNNDIIEGIFLDSSENQTLKIIAMIQWAVAFCPNALFILKVDEETFVNLPSLVDYLLNLKEHLEDIYVGRVLHQVTPNRDPQNRDFVPLSEYPEKYYPDYCSGEAFIMSQDVARMMYVVFKEVPMMVPADVFVGICAKFIGLIPIHSSRFSGKRHIRYNRCCYKFIFTSSEIADPEMPLAWKEINDGKECTLFETSYELISCKLLTYLDSFKRFHMGTIKNNLMYFAD.

At 1–12 (MQVTFCRLRTHQ) the chain is on the cytoplasmic side. The helical; Signal-anchor for type II membrane protein transmembrane segment at 13–33 (WCFILFNVILFHALLFGTDFV) threads the bilayer. Residues 34 to 369 (EEYFLHSLPY…IKNNLMYFAD (336 aa)) lie on the Lumenal side of the membrane. Residues Asn-66, Asn-96, and Asn-109 are each glycosylated (N-linked (GlcNAc...) asparagine).

The protein belongs to the glycosyltransferase 31 family.

It localises to the golgi apparatus membrane. Putative glycosyltransferase that could catalyze the transfer of galactose residues from UDP-alpha-D-galactose. This is Beta-1,3-galactosyltransferase 9 from Homo sapiens (Human).